Here is a 348-residue protein sequence, read N- to C-terminus: A-type ATP synthase subunit C (348 aa).

This sequence belongs to the V-ATPase V0D/AC39 subunit family. Has multiple subunits with at least A(3), B(3), C, D, E, F, H, I and proteolipid K(x).

Its subcellular location is the cell membrane. Functionally, component of the A-type ATP synthase that produces ATP from ADP in the presence of a proton gradient across the membrane. The sequence is that of A-type ATP synthase subunit C from Halorubrum lacusprofundi (strain ATCC 49239 / DSM 5036 / JCM 8891 / ACAM 34).